A 389-amino-acid polypeptide reads, in one-letter code: DEAD-box ATP-dependent RNA helicase CshC (389 aa).

A Q motif motif is present at residues 1–26; it reads MIKDMQPFLQQAWEKAGFKELTEIQK. Positions 29–199 constitute a Helicase ATP-binding domain; that stretch reads IPTILEGQDV…RDLAVEPQLV (171 aa). ATP is bound at residue 42–49; that stretch reads SPTGTGKT. The DEAD box signature appears at 147-150; sequence DEFD. One can recognise a Helicase C-terminal domain in the interval 209–379; sequence LVEHTYIICE…TKPKAPKKKK (171 aa). A disordered region spans residues 368–389; the sequence is VETKPKAPKKKKPAFTGKKKPR. Positions 373–389 are enriched in basic residues; that stretch reads KAPKKKKPAFTGKKKPR.

The enzyme catalyses ATP + H2O = ADP + phosphate + H(+). Functionally, DEAD-box RNA helicase. Probably has an RNA-dependent ATPase activity and a 3' to 5' RNA helicase activity that uses the energy of ATP hydrolysis to destabilize and unwind short RNA duplexes. This Bacillus cereus (strain ATCC 14579 / DSM 31 / CCUG 7414 / JCM 2152 / NBRC 15305 / NCIMB 9373 / NCTC 2599 / NRRL B-3711) protein is DEAD-box ATP-dependent RNA helicase CshC (cshC).